A 256-amino-acid polypeptide reads, in one-letter code: uncharacterized protein (256 aa).

An N-terminal signal peptide occupies residues 1–24 (MIKRVNKLVIGISLLFLVISITAG). Cys-25 carries the N-palmitoyl cysteine lipid modification. Cys-25 carries S-diacylglycerol cysteine lipidation.

It belongs to the staphylococcal tandem lipoprotein family.

The protein localises to the cell membrane. This is an uncharacterized protein from Staphylococcus aureus (strain bovine RF122 / ET3-1).